A 1098-amino-acid polypeptide reads, in one-letter code: Transcription elongation regulator 1 (1098 aa).

Residues 1–15 (MAERGGDGGESERFN) are compositionally biased toward basic and acidic residues. Residues 1-105 (MAERGGDGGE…RPPFMPPPMS (105 aa)) form a disordered region. A Phosphoserine modification is found at Ser-11. Arg-20 bears the Omega-N-methylarginine mark. 4 positions are modified to asymmetric dimethylarginine: Arg-28, Arg-30, Arg-41, and Arg-48. The segment covering 32–105 (PAPPPNAVMR…RPPFMPPPMS (74 aa)) has biased composition (pro residues). In terms of domain architecture, WW 1 spans 131-164 (PPTEEIWVENKTPDGKVYYYNARTRESAWTKPDG). Residues 184 to 244 (QAQAQAQAQA…AQAQAQAQVQ (61 aa)) are a coiled coil. Residues 259-333 (STPTTSSPAP…PTATPVQTVP (75 aa)) are compositionally biased toward low complexity. A disordered region spans residues 259-348 (STPTTSSPAP…TLPPAVPHSV (90 aa)). Residues 334–344 (QPHPQTLPPAV) show a composition bias toward pro residues. The 34-residue stretch at 429–462 (ATAVSEWTEYKTADGKTYYYNNRTLESTWEKPQE) folds into the WW 2 domain. 2 stretches are compositionally biased toward basic and acidic residues: residues 469–481 (LEEK…KEPS) and 496–506 (EEPIKEIKEEP). Residues 469-526 (LEEKIKEPIKEPSEEPLPMETEEEDPKEEPIKEIKEEPKEEEMTEEEKAAQKAKPVAT) form a disordered region. Residues Lys-503 and Lys-507 each participate in a glycyl lysine isopeptide (Lys-Gly) (interchain with G-Cter in SUMO2) cross-link. The WW 3 domain maps to 528–561 (PIPGTPWCVVWTGDERVFFYNPTTRLSMWDRPDD). A coiled-coil region spans residues 606 to 655 (AIKEEQELMEEINEDEPVKAKKRKRDDNKDIDSEKEAAMEAEIKAARERA). Residue Lys-608 forms a Glycyl lysine isopeptide (Lys-Gly) (interchain with G-Cter in SUMO2) linkage. Positions 615 to 640 (EEINEDEPVKAKKRKRDDNKDIDSEK) are disordered. Residues 626-630 (KKRKR) carry the Nuclear localization signal motif. The span at 630–640 (RDDNKDIDSEK) shows a compositional bias: basic and acidic residues. At Ser-638 the chain carries Phosphoserine. FF domains lie at 659 to 712 (LEAR…YVKT), 725 to 779 (IMQA…FVAA), and 791 to 846 (RGEK…YIEK). A Phosphoserine modification is found at Ser-834. A coiled-coil region spans residues 844–906 (IEKIAKNLDS…EEAIQNFKAL (63 aa)). A disordered region spans residues 870-895 (REREREVQKARSEQTKEIDREREQHK). FF domains lie at 896-952 (REEA…HIEA), 954-1010 (TKKK…YIRD), and 1012-1077 (YITA…YVDD). At Ser-933 the chain carries Phosphoserine. Residues 1076–1098 (DDLDRRGPPPPPTASEPTRRSTK) are disordered.

Binds formin. Interacts (via the second WW domain) with TREX1 (via proline-rich region). Binds RNA polymerase II, HD and SF1. Detected in brain neurons.

It is found in the nucleus. Transcription factor that binds RNA polymerase II and inhibits the elongation of transcripts from target promoters. Regulates transcription elongation in a TATA box-dependent manner. Necessary for TAT-dependent activation of the human immunodeficiency virus type 1 (HIV-1) promoter. This chain is Transcription elongation regulator 1 (TCERG1), found in Homo sapiens (Human).